The primary structure comprises 484 residues: Keratin, type I cytoskeletal 14 (484 aa).

The tract at residues 1 to 20 (MATCSRQFTSSSSMKGSCGI) is disordered. A head region spans residues 1–120 (MATCSRQFTS…GIGDGLLVGS (120 aa)). The interval 121 to 156 (EKVTMQNLNDRLATYLDKVRALEEANTELEVKIRDW) is coil 1A. Positions 121–432 (EKVTMQNLND…RLLEGEDAHL (312 aa)) constitute an IF rod domain. A linker 1 region spans residues 157-174 (YQRQRPTEIKDYSPYFKT). Residues 175–266 (IEDLKSKILA…KNHEEEMASM (92 aa)) are coil 1B. The linker 12 stretch occupies residues 267–289 (RGQVGGDVNVEMDAAPGVDLSRI). Residues 290-428 (LNEMRDQYEK…ATYRRLLEGE (139 aa)) form a coil 2 region. Residues 429-484 (DAHLSSSQFSSSSQFSSGSQSSRDVTSTNRQIRTKVMDVHDGKVVSTHEQVLRTKN) form a tail region. The segment at 431–484 (HLSSSQFSSSSQFSSGSQSSRDVTSTNRQIRTKVMDVHDGKVVSTHEQVLRTKN) is interaction with Type I keratins and keratin filaments. The span at 435-450 (SQFSSSSQFSSGSQSS) shows a compositional bias: low complexity. A disordered region spans residues 435-457 (SQFSSSSQFSSGSQSSRDVTSTN). Ser447 is subject to Phosphoserine.

It belongs to the intermediate filament family. Heterotetramer of two type I and two type II keratins. Forms a disulfide-linked heterodimer (via 2B domains) with KRT5 (via 2B domains). Forms a heterodimer with KRT1; the interaction is more abundant in the absence of KRT5. Interacts with PLEC isoform 1C, when in a heterodimer with KRT5. Interacts with TRADD and with keratin filaments. Associates with other type I keratins. Interacts with EPPK1. Interacts with KLHL24. Interacts with PKP1 (via N-terminus) and PKP2. In terms of processing, a disulfide bond is formed between rather than within filaments and promotes the formation of a keratin filament cage around the nucleus. Ubiquitinated by the BCR(KLHL24) E3 ubiquitin ligase complex. As to expression, expressed in the corneal epithelium (at protein level). Expressed in the basal layer of the epidermis and the outer root sheath of hair follicles (at protein level). Expressed in the epithelial basal layer in the tail epidermis. Expressed in the parabasal cell row, basal cell layer, and suprabasal epithelial layer of the tongue.

It is found in the cytoplasm. The protein localises to the nucleus. Its function is as follows. The nonhelical tail domain is involved in promoting KRT5-KRT14 filaments to self-organize into large bundles and enhances the mechanical properties involved in resilience of keratin intermediate filaments in vitro. This Mus musculus (Mouse) protein is Keratin, type I cytoskeletal 14 (Krt14).